The following is a 147-amino-acid chain: Phage-like element PBSX protein XkdM (147 aa).

This sequence to B.subtilis YqbM.

This Bacillus subtilis (strain 168) protein is Phage-like element PBSX protein XkdM (xkdM).